Reading from the N-terminus, the 287-residue chain is Large ribosomal subunit protein uL2 (287 aa).

A disordered region spans residues 221 to 287 (RGSVMNPCDH…SKRSRGGRDS (67 aa)). The segment covering 258–287 (KTRKRNKPSNKFVLRKRRKTSKRSRGGRDS) has biased composition (basic residues).

This sequence belongs to the universal ribosomal protein uL2 family. As to quaternary structure, part of the 50S ribosomal subunit. Forms a bridge to the 30S subunit in the 70S ribosome.

In terms of biological role, one of the primary rRNA binding proteins. Required for association of the 30S and 50S subunits to form the 70S ribosome, for tRNA binding and peptide bond formation. It has been suggested to have peptidyltransferase activity; this is somewhat controversial. Makes several contacts with the 16S rRNA in the 70S ribosome. The sequence is that of Large ribosomal subunit protein uL2 from Synechococcus sp. (strain WH7803).